We begin with the raw amino-acid sequence, 693 residues long: Elongation factor G (693 aa).

The region spanning 8-283 is the tr-type G domain; it reads NRCRNIGIMA…AVVDYLPSPL (276 aa). GTP contacts are provided by residues 17-24, 81-85, and 135-138; these read AHIDAGKT, DTPGH, and NKMD.

It belongs to the TRAFAC class translation factor GTPase superfamily. Classic translation factor GTPase family. EF-G/EF-2 subfamily.

It localises to the cytoplasm. Catalyzes the GTP-dependent ribosomal translocation step during translation elongation. During this step, the ribosome changes from the pre-translocational (PRE) to the post-translocational (POST) state as the newly formed A-site-bound peptidyl-tRNA and P-site-bound deacylated tRNA move to the P and E sites, respectively. Catalyzes the coordinated movement of the two tRNA molecules, the mRNA and conformational changes in the ribosome. The protein is Elongation factor G of Acidobacterium capsulatum (strain ATCC 51196 / DSM 11244 / BCRC 80197 / JCM 7670 / NBRC 15755 / NCIMB 13165 / 161).